Reading from the N-terminus, the 325-residue chain is Transaldolase (325 aa).

The Schiff-base intermediate with substrate role is filled by Lys-125.

This sequence belongs to the transaldolase family. Type 2 subfamily.

Its subcellular location is the cytoplasm. The enzyme catalyses D-sedoheptulose 7-phosphate + D-glyceraldehyde 3-phosphate = D-erythrose 4-phosphate + beta-D-fructose 6-phosphate. Its pathway is carbohydrate degradation; pentose phosphate pathway; D-glyceraldehyde 3-phosphate and beta-D-fructose 6-phosphate from D-ribose 5-phosphate and D-xylulose 5-phosphate (non-oxidative stage): step 2/3. Functionally, transaldolase is important for the balance of metabolites in the pentose-phosphate pathway. The polypeptide is Transaldolase (Campylobacter jejuni subsp. doylei (strain ATCC BAA-1458 / RM4099 / 269.97)).